The primary structure comprises 334 residues: GTP 3',8-cyclase (334 aa).

One can recognise a Radical SAM core domain in the interval 11-236 (GFNRKIDYLR…ESTESSMGPA (226 aa)). Arginine 20 lines the GTP pocket. Positions 27 and 31 each coordinate [4Fe-4S] cluster. Residue tyrosine 33 coordinates S-adenosyl-L-methionine. Cysteine 34 provides a ligand contact to [4Fe-4S] cluster. Arginine 69 serves as a coordination point for GTP. Glycine 73 contacts S-adenosyl-L-methionine. Residue threonine 100 participates in GTP binding. An S-adenosyl-L-methionine-binding site is contributed by serine 124. Lysine 161 is a GTP binding site. S-adenosyl-L-methionine is bound at residue methionine 195. Cysteine 260 and cysteine 263 together coordinate [4Fe-4S] cluster. Residue 265–267 (RVR) participates in GTP binding. Position 277 (cysteine 277) interacts with [4Fe-4S] cluster.

It belongs to the radical SAM superfamily. MoaA family. Monomer and homodimer. [4Fe-4S] cluster serves as cofactor.

The enzyme catalyses GTP + AH2 + S-adenosyl-L-methionine = (8S)-3',8-cyclo-7,8-dihydroguanosine 5'-triphosphate + 5'-deoxyadenosine + L-methionine + A + H(+). The protein operates within cofactor biosynthesis; molybdopterin biosynthesis. Its function is as follows. Catalyzes the cyclization of GTP to (8S)-3',8-cyclo-7,8-dihydroguanosine 5'-triphosphate. In Pseudomonas putida (strain ATCC 47054 / DSM 6125 / CFBP 8728 / NCIMB 11950 / KT2440), this protein is GTP 3',8-cyclase.